The sequence spans 194 residues: ATP-dependent Clp protease proteolytic subunit (194 aa).

The active-site Nucleophile is Ser-97. The active site involves His-122.

Belongs to the peptidase S14 family. In terms of assembly, fourteen ClpP subunits assemble into 2 heptameric rings which stack back to back to give a disk-like structure with a central cavity, resembling the structure of eukaryotic proteasomes.

It is found in the cytoplasm. The catalysed reaction is Hydrolysis of proteins to small peptides in the presence of ATP and magnesium. alpha-casein is the usual test substrate. In the absence of ATP, only oligopeptides shorter than five residues are hydrolyzed (such as succinyl-Leu-Tyr-|-NHMec, and Leu-Tyr-Leu-|-Tyr-Trp, in which cleavage of the -Tyr-|-Leu- and -Tyr-|-Trp bonds also occurs).. In terms of biological role, cleaves peptides in various proteins in a process that requires ATP hydrolysis. Has a chymotrypsin-like activity. Plays a major role in the degradation of misfolded proteins. The chain is ATP-dependent Clp protease proteolytic subunit from Thermus thermophilus (strain ATCC BAA-163 / DSM 7039 / HB27).